The primary structure comprises 549 residues: MNYKVKFEHVTKKYKLYNKPFDKLKDLFFRSKDGEYHYALNNISFEVPEGEIVGIVGLNGSGKSTLSNLIAGVTMPNKGTVDIKGSAALIAISSGLNGQLTGIENIELKGLMMGITKEKIKEIIPEIIDFADIGKFMYQPVKTYSSGMKSRLGFAISVHINPDILVIDEALSVGDQTFTKKCLDKMNEFKEQGKTIFFISHSLSQVKSFCTKALWLHYGQVKEYGDIKEIVDHYDEFLKKYNQMSVEERKDLRKEQISQFQHGLLQEDQTGRERKRKKGKKTSRKFKKKRVLITGVCIALLTGIISTGYYYKNLLPFNSENKYAEKVASKENVTESKQMVKKEKGAAKYIVNSNGISIREEADASSKRLAIANFGDIFTISDSNKNEKKDVEWIQITLSNGEIGWISTKFIEPFKSNNNIIEDAKLADVTALLKRVYGGNMVSAPTYFGKTLNELETTYPQPLNPLPSMTGKTIVKDGNIQFGISQDKVVEVVFQDISMSIAKLHELLGKESLSNDAEKNYFYETKSYYIAARSDQTHKEIQSISIVKK.

The ABC transporter domain occupies 22–243; sequence DKLKDLFFRS…YDEFLKKYNQ (222 aa). ATP is bound at residue 57–64; sequence GLNGSGKS. Positions 244–549 are unknown; the sequence is MSVEERKDLR…EIQSISIVKK (306 aa). The region spanning 346 to 415 is the SH3b domain; the sequence is AAKYIVNSNG…ISTKFIEPFK (70 aa).

The protein belongs to the ABC transporter superfamily. Teichoic acids exporter (TC 3.A.1.104.1) family. As to quaternary structure, the complex is composed of two ATP-binding proteins (TagH) and two transmembrane proteins (TagG).

It localises to the cell membrane. The enzyme catalyses ATP + H2O + teichoic acidSide 1 = ADP + phosphate + teichoic acidSide 2.. Its function is as follows. Part of the ABC transporter complex TagGH involved in teichoic acids export. Responsible for energy coupling to the transport system. The protein is Teichoic acids export ATP-binding protein TagH of Bacillus anthracis.